Here is an 887-residue protein sequence, read N- to C-terminus: Bifunctional uridylyltransferase/uridylyl-removing enzyme (887 aa).

Positions 1 to 337 (MINTSPLLNY…RLPNYERKIE (337 aa)) are uridylyltransferase. The uridylyl-removing stretch occupies residues 339–699 (VNDHFKIVDN…AHRKAAQDAV (361 aa)). Residues 457 to 579 (VDAHTLLLLR…LGDMEHLDYL (123 aa)) enclose the HD domain. ACT domains lie at 700 to 782 (QIFI…LMQR) and 809 to 887 (MVEI…ICQH).

The protein belongs to the GlnD family. The cofactor is Mg(2+).

It carries out the reaction [protein-PII]-L-tyrosine + UTP = [protein-PII]-uridylyl-L-tyrosine + diphosphate. The enzyme catalyses [protein-PII]-uridylyl-L-tyrosine + H2O = [protein-PII]-L-tyrosine + UMP + H(+). Its activity is regulated as follows. Uridylyltransferase (UTase) activity is inhibited by glutamine, while glutamine activates uridylyl-removing (UR) activity. Functionally, modifies, by uridylylation and deuridylylation, the PII regulatory proteins (GlnB and homologs), in response to the nitrogen status of the cell that GlnD senses through the glutamine level. Under low glutamine levels, catalyzes the conversion of the PII proteins and UTP to PII-UMP and PPi, while under higher glutamine levels, GlnD hydrolyzes PII-UMP to PII and UMP (deuridylylation). Thus, controls uridylylation state and activity of the PII proteins, and plays an important role in the regulation of nitrogen assimilation and metabolism. This is Bifunctional uridylyltransferase/uridylyl-removing enzyme from Acinetobacter baumannii (strain AB307-0294).